Consider the following 708-residue polypeptide: tRNA 5-methylaminomethyl-2-thiouridine biosynthesis bifunctional protein MnmC (708 aa).

The interval 1–278 is tRNA (mnm(5)s(2)U34)-methyltransferase; that stretch reads MTAEPNKPCQ…ERQVLRQQDA (278 aa). Residues 301–708 form an FAD-dependent cmnm(5)s(2)U34 oxidoreductase region; it reads IGGGLASAHL…LRKLLKGKAL (408 aa).

In the N-terminal section; belongs to the methyltransferase superfamily. tRNA (mnm(5)s(2)U34)-methyltransferase family. It in the C-terminal section; belongs to the DAO family. Requires FAD as cofactor.

It localises to the cytoplasm. The enzyme catalyses 5-aminomethyl-2-thiouridine(34) in tRNA + S-adenosyl-L-methionine = 5-methylaminomethyl-2-thiouridine(34) in tRNA + S-adenosyl-L-homocysteine + H(+). In terms of biological role, catalyzes the last two steps in the biosynthesis of 5-methylaminomethyl-2-thiouridine (mnm(5)s(2)U) at the wobble position (U34) in tRNA. Catalyzes the FAD-dependent demodification of cmnm(5)s(2)U34 to nm(5)s(2)U34, followed by the transfer of a methyl group from S-adenosyl-L-methionine to nm(5)s(2)U34, to form mnm(5)s(2)U34. This Shewanella baltica (strain OS195) protein is tRNA 5-methylaminomethyl-2-thiouridine biosynthesis bifunctional protein MnmC.